We begin with the raw amino-acid sequence, 460 residues long: Argininosuccinate lyase (460 aa).

The protein belongs to the lyase 1 family. Argininosuccinate lyase subfamily.

It is found in the cytoplasm. The catalysed reaction is 2-(N(omega)-L-arginino)succinate = fumarate + L-arginine. It functions in the pathway amino-acid biosynthesis; L-arginine biosynthesis; L-arginine from L-ornithine and carbamoyl phosphate: step 3/3. The polypeptide is Argininosuccinate lyase (Alkaliphilus metalliredigens (strain QYMF)).